Reading from the N-terminus, the 185-residue chain is Ribosome-recycling factor (185 aa).

Belongs to the RRF family.

It localises to the cytoplasm. Its function is as follows. Responsible for the release of ribosomes from messenger RNA at the termination of protein biosynthesis. May increase the efficiency of translation by recycling ribosomes from one round of translation to another. This chain is Ribosome-recycling factor, found in Shewanella loihica (strain ATCC BAA-1088 / PV-4).